The sequence spans 224 residues: Small ribosomal subunit protein uS3 (224 aa).

A KH type-2 domain is found at 38–106 (IRKFISEKLK…QVHINIVEIK (69 aa)).

The protein belongs to the universal ribosomal protein uS3 family. In terms of assembly, part of the 30S ribosomal subunit. Forms a tight complex with proteins S10 and S14.

In terms of biological role, binds the lower part of the 30S subunit head. Binds mRNA in the 70S ribosome, positioning it for translation. The protein is Small ribosomal subunit protein uS3 of Lactobacillus acidophilus (strain ATCC 700396 / NCK56 / N2 / NCFM).